Consider the following 229-residue polypeptide: Potassium/proton antiporter CemA (229 aa).

Transmembrane regions (helical) follow at residues 6-26 (AFIP…ISLC), 107-127 (ILHF…SFWA), and 189-209 (ILSG…KYWI).

Belongs to the CemA family.

It localises to the plastid. It is found in the chloroplast inner membrane. The catalysed reaction is K(+)(in) + H(+)(out) = K(+)(out) + H(+)(in). Contributes to K(+)/H(+) antiport activity by supporting proton efflux to control proton extrusion and homeostasis in chloroplasts in a light-dependent manner to modulate photosynthesis. Prevents excessive induction of non-photochemical quenching (NPQ) under continuous-light conditions. Indirectly promotes efficient inorganic carbon uptake into chloroplasts. The polypeptide is Potassium/proton antiporter CemA (Crucihimalaya wallichii (Rock-cress)).